We begin with the raw amino-acid sequence, 764 residues long: Nucleolar complex-associated protein 2 (764 aa).

Positions 3-69 (AKDDKKRVKK…EEELKRLQEK (67 aa)) form a coiled coil. Disordered regions lie at residues 23–67 (ELNN…KRLQ), 89–113 (ATEIEDDADVEPDTDLEDTEKEGDD), 627–646 (AVFGKNAPSSDDEDDEDRME), and 651–726 (AFNS…EDDA). Positions 30 to 41 (IDAHDIVMEQKS) are enriched in basic and acidic residues. Over residues 42-51 (DKKRGKKVKS) the composition is skewed to basic residues. Positions 52 to 67 (KKAEAEEHEEELKRLQ) are enriched in basic and acidic residues. Residues 90–113 (TEIEDDADVEPDTDLEDTEKEGDD) show a composition bias toward acidic residues. Positions 661 to 672 (DSKEKEPEEEKT) are enriched in basic and acidic residues. Residues 673–680 (KKKKRKRG) carry the Nuclear localization signal 1 motif. Residues 673-682 (KKKKRKRGGK) are compositionally biased toward basic residues. Residues 693 to 726 (GLGEDDVVEDFVLSSDEEEEDLFDIGGDKDEDDA) are compositionally biased toward acidic residues. The Nuclear localization signal 2 motif lies at 738-745 (SKKTKGTY).

It belongs to the NOC2 family. As to quaternary structure, component of nucleolar complexes. Forms homodimers. Interacts with RBL and NOC3 in both the nucleolus and nucleoplasm. Binds to SWA2.

The protein resides in the nucleus. It localises to the nucleolus. Its subcellular location is the nucleoplasm. Functionally, together with SWA2, probably involved in pre-ribosome export from the nucleus to the cytoplasm. This Arabidopsis thaliana (Mouse-ear cress) protein is Nucleolar complex-associated protein 2.